Consider the following 202-residue polypeptide: Holliday junction branch migration complex subunit RuvA (202 aa).

A domain I region spans residues 1–64; it reads MISRLRGTVL…EDAFDLFGFL (64 aa). The interval 65 to 143 is domain II; sequence TKGEEEVFLL…TIHLEAVSRG (79 aa). The flexible linker stretch occupies residues 143–147; the sequence is GTAPA. Positions 148-202 are domain III; that stretch reads AVSGAHADLVSALLNLGYKQPQAEKAADLASERLGAEATFQALFREALKALRSGG.

Belongs to the RuvA family. Homotetramer. Forms an RuvA(8)-RuvB(12)-Holliday junction (HJ) complex. HJ DNA is sandwiched between 2 RuvA tetramers; dsDNA enters through RuvA and exits via RuvB. An RuvB hexamer assembles on each DNA strand where it exits the tetramer. Each RuvB hexamer is contacted by two RuvA subunits (via domain III) on 2 adjacent RuvB subunits; this complex drives branch migration. In the full resolvosome a probable DNA-RuvA(4)-RuvB(12)-RuvC(2) complex forms which resolves the HJ.

Its subcellular location is the cytoplasm. Its function is as follows. The RuvA-RuvB-RuvC complex processes Holliday junction (HJ) DNA during genetic recombination and DNA repair, while the RuvA-RuvB complex plays an important role in the rescue of blocked DNA replication forks via replication fork reversal (RFR). RuvA specifically binds to HJ cruciform DNA, conferring on it an open structure. The RuvB hexamer acts as an ATP-dependent pump, pulling dsDNA into and through the RuvAB complex. HJ branch migration allows RuvC to scan DNA until it finds its consensus sequence, where it cleaves and resolves the cruciform DNA. The polypeptide is Holliday junction branch migration complex subunit RuvA (Myxococcus xanthus (strain DK1622)).